Here is a 78-residue protein sequence, read N- to C-terminus: DNA-directed RNA polymerase subunit Rpo5 (78 aa).

This sequence belongs to the archaeal Rpo5/eukaryotic RPB5 RNA polymerase subunit family. In terms of assembly, part of the RNA polymerase complex.

The protein localises to the cytoplasm. The enzyme catalyses RNA(n) + a ribonucleoside 5'-triphosphate = RNA(n+1) + diphosphate. DNA-dependent RNA polymerase (RNAP) catalyzes the transcription of DNA into RNA using the four ribonucleoside triphosphates as substrates. The chain is DNA-directed RNA polymerase subunit Rpo5 from Methanosarcina mazei (strain ATCC BAA-159 / DSM 3647 / Goe1 / Go1 / JCM 11833 / OCM 88) (Methanosarcina frisia).